Consider the following 141-residue polypeptide: MAKKVVGYIKLQIPAGKATPAPPVGPALGQHGVNIMAFCKEFNERTAKDAGLVIPVVITVYADRSFSFVTKTPPASVLIKRACKIEKGSGRPNREKVAKISKEEVRKIAEMKMPDLNAASLEAAMSMIAGTARSMGVVVED.

It belongs to the universal ribosomal protein uL11 family. In terms of assembly, part of the ribosomal stalk of the 50S ribosomal subunit. Interacts with L10 and the large rRNA to form the base of the stalk. L10 forms an elongated spine to which L12 dimers bind in a sequential fashion forming a multimeric L10(L12)X complex. In terms of processing, one or more lysine residues are methylated.

Forms part of the ribosomal stalk which helps the ribosome interact with GTP-bound translation factors. The protein is Large ribosomal subunit protein uL11 of Acetivibrio thermocellus (strain ATCC 27405 / DSM 1237 / JCM 9322 / NBRC 103400 / NCIMB 10682 / NRRL B-4536 / VPI 7372) (Clostridium thermocellum).